A 124-amino-acid chain; its full sequence is Small ribosomal subunit protein uS11 (124 aa).

This sequence belongs to the universal ribosomal protein uS11 family. As to quaternary structure, part of the 30S ribosomal subunit. Interacts with proteins S7 and S18. Binds to IF-3.

Functionally, located on the platform of the 30S subunit, it bridges several disparate RNA helices of the 16S rRNA. Forms part of the Shine-Dalgarno cleft in the 70S ribosome. The sequence is that of Small ribosomal subunit protein uS11 from Anaplasma marginale (strain St. Maries).